We begin with the raw amino-acid sequence, 372 residues long: tRNA 2-selenouridine synthase (372 aa).

The region spanning 17–140 is the Rhodanese domain; that stretch reads FLQDIPLIDV…LRNFLLTTLE (124 aa). The active-site S-selanylcysteine intermediate is the C100.

It belongs to the SelU family. As to quaternary structure, monomer.

It catalyses the reaction 5-methylaminomethyl-2-thiouridine(34) in tRNA + selenophosphate + (2E)-geranyl diphosphate + H2O + H(+) = 5-methylaminomethyl-2-selenouridine(34) in tRNA + (2E)-thiogeraniol + phosphate + diphosphate. The enzyme catalyses 5-methylaminomethyl-2-thiouridine(34) in tRNA + (2E)-geranyl diphosphate = 5-methylaminomethyl-S-(2E)-geranyl-thiouridine(34) in tRNA + diphosphate. It carries out the reaction 5-methylaminomethyl-S-(2E)-geranyl-thiouridine(34) in tRNA + selenophosphate + H(+) = 5-methylaminomethyl-2-(Se-phospho)selenouridine(34) in tRNA + (2E)-thiogeraniol. The catalysed reaction is 5-methylaminomethyl-2-(Se-phospho)selenouridine(34) in tRNA + H2O = 5-methylaminomethyl-2-selenouridine(34) in tRNA + phosphate. In terms of biological role, involved in the post-transcriptional modification of the uridine at the wobble position (U34) of tRNA(Lys), tRNA(Glu) and tRNA(Gln). Catalyzes the conversion of 2-thiouridine (S2U-RNA) to 2-selenouridine (Se2U-RNA). Acts in a two-step process involving geranylation of 2-thiouridine (S2U) to S-geranyl-2-thiouridine (geS2U) and subsequent selenation of the latter derivative to 2-selenouridine (Se2U) in the tRNA chain. This Serratia proteamaculans (strain 568) protein is tRNA 2-selenouridine synthase.